The primary structure comprises 328 residues: MNSEKEDEPLEEIGDSNNVLDLTSYQLHSLDTVELPPNLIELDLTANRLSGLDSRIAQLSTLKKLSLRQNLIDDSAVEPLSHWDALSDLEELVLRDNKLAKVPDVSIFTKLLVYDISFNEITSLEGISKASSTLKELYVSKNEVNKIMEIEHLHNLQILELGSNRLRVMENLENFTKLEELWLGRNRIKVVNLCGLKCIKKISLQSNRLTSMKGFEECVALEELYLSHNGISKMEGLSALVNLRVLDVSNNKLTSVDDIQNLTKLEDLWLNDNQIESLEAITEAVTGSKEKLTTIYLENNPCAKSSDYVAAVRQIFPNVEQIDSNLFA.

LRR repeat units lie at residues 13–36 (IGDSNNVLDLTSYQLHSLDTVELP), 37–59 (PNLIELDLTANRLSGLDSRIAQL), 61–82 (TLKKLSLRQNLIDDSAVEPLSH), 86–110 (LSDLEELVLRDNKLAKVPDVSIFTK), 111–130 (LLVYDISFNEITSLEGISKA), 131–153 (SSTLKELYVSKNEVNKIMEIEHL), 154–177 (HNLQILELGSNRLRVMENLENFTK), 179–196 (EELWLGRNRIKVVNLCGL), 197–221 (KCIKKISLQSNRLTSMKGFEECVAL), 223–240 (ELYLSHNGISKMEGLSAL), 241–264 (VNLRVLDVSNNKLTSVDDIQNLTK), 266–287 (EDLWLNDNQIESLEAITEAVTG), and 289–312 (KEKLTTIYLENNPCAKSSDYVAAV).

Interacts with human protein phosphatase PPP1C.

Its function is as follows. Inhibitor of protein-phosphatase 1 (PP1). Binds to and inhibits PP1 activity. The protein is Protein phosphatase 1 regulatory inhibitor subunit PPP1R7 homolog of Arabidopsis thaliana (Mouse-ear cress).